We begin with the raw amino-acid sequence, 391 residues long: 1-deoxy-D-xylulose 5-phosphate reductoisomerase (391 aa).

The NADPH site is built by Thr10, Gly11, Ser12, Ile13, Asn38, and Asn122. Position 123 (Lys123) interacts with 1-deoxy-D-xylulose 5-phosphate. Glu124 is a binding site for NADPH. Asp148 is a Mn(2+) binding site. Residues Ser149, Glu150, Ser173, and His196 each coordinate 1-deoxy-D-xylulose 5-phosphate. Position 150 (Glu150) interacts with Mn(2+). Position 202 (Gly202) interacts with NADPH. Positions 209, 214, 215, and 218 each coordinate 1-deoxy-D-xylulose 5-phosphate. Position 218 (Glu218) interacts with Mn(2+).

Belongs to the DXR family. Mg(2+) is required as a cofactor. It depends on Mn(2+) as a cofactor.

It carries out the reaction 2-C-methyl-D-erythritol 4-phosphate + NADP(+) = 1-deoxy-D-xylulose 5-phosphate + NADPH + H(+). The protein operates within isoprenoid biosynthesis; isopentenyl diphosphate biosynthesis via DXP pathway; isopentenyl diphosphate from 1-deoxy-D-xylulose 5-phosphate: step 1/6. In terms of biological role, catalyzes the NADPH-dependent rearrangement and reduction of 1-deoxy-D-xylulose-5-phosphate (DXP) to 2-C-methyl-D-erythritol 4-phosphate (MEP). This Wolbachia pipientis subsp. Culex pipiens (strain wPip) protein is 1-deoxy-D-xylulose 5-phosphate reductoisomerase.